The chain runs to 158 residues: Small ribosomal subunit protein uS10m (158 aa).

It belongs to the universal ribosomal protein uS10 family.

The protein resides in the mitochondrion. In Caenorhabditis briggsae, this protein is Small ribosomal subunit protein uS10m (mrps-10).